A 370-amino-acid polypeptide reads, in one-letter code: Peptide chain release factor 2 (370 aa).

Gln252 carries the N5-methylglutamine modification.

The protein belongs to the prokaryotic/mitochondrial release factor family. Post-translationally, methylated by PrmC. Methylation increases the termination efficiency of RF2.

Its subcellular location is the cytoplasm. In terms of biological role, peptide chain release factor 2 directs the termination of translation in response to the peptide chain termination codons UGA and UAA. The protein is Peptide chain release factor 2 of Mycobacterium avium (strain 104).